Reading from the N-terminus, the 630-residue chain is Sodium-dependent serotonin transporter (630 aa).

At 1 to 87 the chain is on the cytoplasmic side; the sequence is METTPLNSQK…ERETWGKKMD (87 aa). Residues 23–60 form a disordered region; the sequence is ENGVLQKGVPTTADRAEPSQISNGYSAVPSTSAGDEAS. Residues 41 to 55 show a composition bias toward polar residues; sequence SQISNGYSAVPSTSA. Position 47 is a phosphotyrosine (tyrosine 47). A helical transmembrane segment spans residues 88–112; sequence FLLSVIGYAVDLGNIWRFPYICYQN. The Na(+) site is built by glycine 94, alanine 96, valine 97, aspartate 98, and asparagine 101. Serotonin is bound at residue aspartate 98. Residues 113–115 lie on the Extracellular side of the membrane; the sequence is GGG. A helical membrane pass occupies residues 116-135; that stretch reads AFLLPYTIMAIFGGIPLFYM. Topologically, residues 136-160 are cytoplasmic; sequence ELALGQYHRNGCISIWRKICPIFKG. Tyrosine 142 is modified (phosphotyrosine). The helical transmembrane segment at 161-186 threads the bilayer; that stretch reads IGYAICIIAFYIASYYNTIIAWALYY. Residues 187 to 252 lie on the Extracellular side of the membrane; the sequence is LISSLTDRLP…KGLQDLGTIS (66 aa). Cysteine 200 and cysteine 209 are disulfide-bonded. Residues asparagine 208 and asparagine 217 are each glycosylated (N-linked (GlcNAc...) asparagine). A helical transmembrane segment spans residues 253-271; sequence WQLTLCIVLIFTVIYFSIW. Over 272–277 the chain is Cytoplasmic; it reads KGVKTS. Threonine 276 carries the phosphothreonine modification. The helical transmembrane segment at 278-297 threads the bilayer; it reads GKVVWVTATFPYIVLSVLLV. Residues 298 to 324 lie on the Extracellular side of the membrane; it reads RGATLPGAWRGVVFYLKPNWQKLLETG. The chain crosses the membrane as a helical span at residues 325 to 347; sequence VWVDAAAQIFFSLGPGFGVLLAF. Position 336 (serine 336) interacts with Na(+). Residues 348-360 lie on the Cytoplasmic side of the membrane; the sequence is ASYNKFNNNCYQD. The chain crosses the membrane as a helical span at residues 361 to 380; that stretch reads ALVTSVVNCMTSFVSGFVIF. Asparagine 368 contacts Na(+). Residues 381–421 are Extracellular-facing; that stretch reads TVLGYMAEMRNEDVSEVAKDAGPSLLFITYAEAIANMPAST. Residues 422–443 traverse the membrane as a helical segment; that stretch reads FFAIIFFLMLITLGLDSTFAGL. Residues leucine 434, aspartate 437, and serine 438 each coordinate Na(+). Threonine 439 contributes to the serotonin binding site. The Cytoplasmic portion of the chain corresponds to 444-463; it reads EGVITAVLDEFPHIWAKRRE. Residues 464–483 traverse the membrane as a helical segment; the sequence is WFVLIVVITCVLGSLLTLTS. The Extracellular segment spans residues 484–494; the sequence is GGAYVVTLLEE. Serotonin is bound by residues glutamate 494 and tyrosine 495. Residues 495–516 form a helical membrane-spanning segment; sequence YATGPAVLTVALIEAVAVSWFY. At 517-538 the chain is on the cytoplasmic side; sequence GITQFCSDVKEMLGFSPGWFWR. Residues 539–558 form a helical membrane-spanning segment; that stretch reads ICWVAISPLFLLFIICSFLM. Serotonin-binding residues include phenylalanine 556 and serine 559. The Extracellular portion of the chain corresponds to 559-574; that stretch reads SPPQLRLFQYNYPHWS. The chain crosses the membrane as a helical span at residues 575-595; it reads IVLGYCIGMSSVICIPTYIIY. Topologically, residues 596 to 630 are cytoplasmic; sequence RLISTPGTLKERIIKSITPETPTEIPCGDIRMNAV. The tract at residues 616-624 is interaction with RAB4A; that stretch reads TPTEIPCGD.

This sequence belongs to the sodium:neurotransmitter symporter (SNF) (TC 2.A.22) family. SLC6A4 subfamily. As to quaternary structure, monomer or homooligomer. Interacts with TGFB1I1. Interacts with SEC23A, SEC24C and PATJ. Interacts with NOS1; the interaction may diminish the cell surface localization of SERT in the brain and, correspondingly, reduce serotonin reuptake. Interacts (via C-terminus) with SCAMP2; the interaction is direct and retains transporter molecules intracellularly. Interacts with filamentous actin and STX1A. Interacts (via the N-terminus) with STX1A (via the H3 domain); this interaction regulates SLC4A6 channel conductance. Interacts with ITGAV:ITGB3. Interacts (via C-terminus) with ITGB3; this interaction regulates SLC6A4 trafficking. In terms of processing, phosphorylation at Thr-276 increases 5-HT uptake and is required for cGMP-mediated SERT regulation. Expressed in the intestinal crypt epithelial cells and myenteric neurons of the small intestine (at protein level). Expressed in the brain.

It is found in the cell membrane. It localises to the endomembrane system. Its subcellular location is the endosome membrane. The protein localises to the synapse. The protein resides in the cell junction. It is found in the focal adhesion. It localises to the cell projection. Its subcellular location is the neuron projection. The enzyme catalyses serotonin(out) + K(+)(in) + Na(+)(out) + H(+)(in) = serotonin(in) + K(+)(out) + Na(+)(in) + H(+)(out). Serotonin transporter that cotransports serotonin with one Na(+) ion in exchange for one K(+) ion and possibly one proton in an overall electroneutral transport cycle. Transports serotonin across the plasma membrane from the extracellular compartment to the cytosol thus limiting serotonin intercellular signaling. Essential for serotonin homeostasis in the central nervous system. In the developing somatosensory cortex, acts in glutamatergic neurons to control serotonin uptake and its trophic functions accounting for proper spatial organization of cortical neurons and elaboration of sensory circuits. In the mature cortex, acts primarily in brainstem raphe neurons to mediate serotonin uptake from the synaptic cleft back into the pre-synaptic terminal thus terminating serotonin signaling at the synapse. Modulates mucosal serotonin levels in the gastrointestinal tract through uptake and clearance of serotonin in enterocytes. Required for enteric neurogenesis and gastrointestinal reflexes. Regulates blood serotonin levels by ensuring rapid high affinity uptake of serotonin from plasma to platelets, where it is further stored in dense granules via vesicular monoamine transporters and then released upon stimulation. Mechanistically, the transport cycle starts with an outward-open conformation having Na1(+) and Cl(-) sites occupied. The binding of a second extracellular Na2(+) ion and serotonin substrate leads to structural changes to outward-occluded to inward-occluded to inward-open, where the Na2(+) ion and serotonin are released into the cytosol. Binding of intracellular K(+) ion induces conformational transitions to inward-occluded to outward-open and completes the cycle by releasing K(+) possibly together with a proton bound to Asp-98 into the extracellular compartment. Na1(+) and Cl(-) ions remain bound throughout the transport cycle. Additionally, displays serotonin-induced channel-like conductance for monovalent cations, mainly Na(+) ions. The channel activity is uncoupled from the transport cycle and may contribute to the membrane resting potential or excitability. This Rattus norvegicus (Rat) protein is Sodium-dependent serotonin transporter (Slc6a4).